The chain runs to 290 residues: Bifunctional protein FolD (290 aa).

NADP(+)-binding positions include 167–169 (GRS), serine 192, and isoleucine 233.

The protein belongs to the tetrahydrofolate dehydrogenase/cyclohydrolase family. As to quaternary structure, homodimer.

The enzyme catalyses (6R)-5,10-methylene-5,6,7,8-tetrahydrofolate + NADP(+) = (6R)-5,10-methenyltetrahydrofolate + NADPH. It carries out the reaction (6R)-5,10-methenyltetrahydrofolate + H2O = (6R)-10-formyltetrahydrofolate + H(+). It functions in the pathway one-carbon metabolism; tetrahydrofolate interconversion. Its function is as follows. Catalyzes the oxidation of 5,10-methylenetetrahydrofolate to 5,10-methenyltetrahydrofolate and then the hydrolysis of 5,10-methenyltetrahydrofolate to 10-formyltetrahydrofolate. This Azorhizobium caulinodans (strain ATCC 43989 / DSM 5975 / JCM 20966 / LMG 6465 / NBRC 14845 / NCIMB 13405 / ORS 571) protein is Bifunctional protein FolD.